Here is a 151-residue protein sequence, read N- to C-terminus: Deoxyuridine 5'-triphosphate nucleotidohydrolase (151 aa).

Residues 71-73 (RSG), Asn84, and 88-90 (TID) contribute to the substrate site.

The protein belongs to the dUTPase family. It depends on Mg(2+) as a cofactor.

It carries out the reaction dUTP + H2O = dUMP + diphosphate + H(+). It participates in pyrimidine metabolism; dUMP biosynthesis; dUMP from dCTP (dUTP route): step 2/2. Functionally, this enzyme is involved in nucleotide metabolism: it produces dUMP, the immediate precursor of thymidine nucleotides and it decreases the intracellular concentration of dUTP so that uracil cannot be incorporated into DNA. The sequence is that of Deoxyuridine 5'-triphosphate nucleotidohydrolase from Gluconobacter oxydans (strain 621H) (Gluconobacter suboxydans).